The chain runs to 189 residues: MIIIISGPPGSGKTSVAIKLANELSYKFISAGKIFRDIAQKMGLDIINLNKVAESNFDIDKMVDKKIFEFILSEKNLIIESHIAGWLFREYTNIAIYLWAPLKIRANRIAIRDKISYDQAISQIIKREYMHYKRFNKFYGIDINDLSVFDLVINTSNVDVNNIVKLILTYLSLVSQNPQPLKEKDINDK.

7–15 serves as a coordination point for ATP; sequence GPPGSGKTS.

Belongs to the cytidylate kinase family. Type 2 subfamily.

The protein localises to the cytoplasm. It carries out the reaction CMP + ATP = CDP + ADP. The catalysed reaction is dCMP + ATP = dCDP + ADP. The chain is Cytidylate kinase from Saccharolobus islandicus (strain Y.N.15.51 / Yellowstone #2) (Sulfolobus islandicus).